A 116-amino-acid chain; its full sequence is Aspartate 1-decarboxylase (116 aa).

S25 serves as the catalytic Schiff-base intermediate with substrate; via pyruvic acid. Residue S25 is modified to Pyruvic acid (Ser). T57 provides a ligand contact to substrate. Y58 serves as the catalytic Proton donor. Residue 73-75 (GPA) coordinates substrate.

This sequence belongs to the PanD family. In terms of assembly, heterooctamer of four alpha and four beta subunits. The cofactor is pyruvate. In terms of processing, is synthesized initially as an inactive proenzyme, which is activated by self-cleavage at a specific serine bond to produce a beta-subunit with a hydroxyl group at its C-terminus and an alpha-subunit with a pyruvoyl group at its N-terminus.

The protein localises to the cytoplasm. The enzyme catalyses L-aspartate + H(+) = beta-alanine + CO2. It functions in the pathway cofactor biosynthesis; (R)-pantothenate biosynthesis; beta-alanine from L-aspartate: step 1/1. Catalyzes the pyruvoyl-dependent decarboxylation of aspartate to produce beta-alanine. The polypeptide is Aspartate 1-decarboxylase (Flavobacterium psychrophilum (strain ATCC 49511 / DSM 21280 / CIP 103535 / JIP02/86)).